The chain runs to 452 residues: Septin-10 (452 aa).

The region spanning 36-302 (QGFCFNILCV…ELYRRCKLQE (267 aa)) is the Septin-type G domain. A G1 motif region spans residues 46–53 (GETGIGKS). GTP is bound by residues 46 to 53 (GETGIGKS), G101, 182 to 190 (KADTISKSE), G236, and R251. Positions 98–101 (NTVG) are G3 motif. The tract at residues 181 to 184 (AKAD) is G4 motif. The residue at position 414 (S414) is a Phosphoserine.

Belongs to the TRAFAC class TrmE-Era-EngA-EngB-Septin-like GTPase superfamily. Septin GTPase family. As to quaternary structure, septins polymerize into heterooligomeric protein complexes that form filaments, and can associate with cellular membranes, actin filaments and microtubules. GTPase activity is required for filament formation. Interacts with ADGB. Proteolytically cleaved in vitro in a calmodulin-dependent manner.

The protein localises to the cytoplasm. It localises to the cytoskeleton. It is found in the cell projection. The protein resides in the cilium. Its subcellular location is the flagellum. Functionally, filament-forming cytoskeletal GTPase. May play a role in cytokinesis (Potential). The chain is Septin-10 from Mus musculus (Mouse).